Consider the following 318-residue polypeptide: Forkhead box protein I2 (318 aa).

The interval 1 to 30 (MATYCDDLGPSSAPPGQAQATAHPPGYEPG) is disordered. The segment at residues 102 to 196 (RPPYSYSALI…DNGNFRRKRK (95 aa)) is a DNA-binding region (fork-head).

The protein localises to the nucleus. Its function is as follows. Possible transcriptional activator. The protein is Forkhead box protein I2 (FOXI2) of Homo sapiens (Human).